We begin with the raw amino-acid sequence, 446 residues long: tRNA-2-methylthio-N(6)-dimethylallyladenosine synthase (446 aa).

Positions 5-121 (KYLYVETFGC…LPEIVRAAER (117 aa)) constitute an MTTase N-terminal domain. Cys14, Cys50, Cys84, Cys159, Cys163, and Cys166 together coordinate [4Fe-4S] cluster. Positions 145 to 375 (GEGGVTRFVT…QTLQQQMKRE (231 aa)) constitute a Radical SAM core domain. One can recognise a TRAM domain in the interval 378-440 (ISFVGTRQLV…QNSLLGEIVT (63 aa)).

The protein belongs to the methylthiotransferase family. MiaB subfamily. In terms of assembly, monomer. [4Fe-4S] cluster serves as cofactor.

Its subcellular location is the cytoplasm. It carries out the reaction N(6)-dimethylallyladenosine(37) in tRNA + (sulfur carrier)-SH + AH2 + 2 S-adenosyl-L-methionine = 2-methylsulfanyl-N(6)-dimethylallyladenosine(37) in tRNA + (sulfur carrier)-H + 5'-deoxyadenosine + L-methionine + A + S-adenosyl-L-homocysteine + 2 H(+). In terms of biological role, catalyzes the methylthiolation of N6-(dimethylallyl)adenosine (i(6)A), leading to the formation of 2-methylthio-N6-(dimethylallyl)adenosine (ms(2)i(6)A) at position 37 in tRNAs that read codons beginning with uridine. This Geobacter sulfurreducens (strain ATCC 51573 / DSM 12127 / PCA) protein is tRNA-2-methylthio-N(6)-dimethylallyladenosine synthase.